The primary structure comprises 62 residues: Photosystem II reaction center protein Z (62 aa).

Helical transmembrane passes span 8-28 (LIAA…VVFS) and 41-61 (WGGA…SIVV).

This sequence belongs to the PsbZ family. PSII is composed of 1 copy each of membrane proteins PsbA, PsbB, PsbC, PsbD, PsbE, PsbF, PsbH, PsbI, PsbJ, PsbK, PsbL, PsbM, PsbT, PsbX, PsbY, PsbZ, Psb30/Ycf12, peripheral proteins PsbO, CyanoQ (PsbQ), PsbU, PsbV and a large number of cofactors. It forms dimeric complexes.

It is found in the cellular thylakoid membrane. In terms of biological role, may control the interaction of photosystem II (PSII) cores with the light-harvesting antenna, regulates electron flow through the 2 photosystem reaction centers. PSII is a light-driven water plastoquinone oxidoreductase, using light energy to abstract electrons from H(2)O, generating a proton gradient subsequently used for ATP formation. The chain is Photosystem II reaction center protein Z from Acaryochloris marina (strain MBIC 11017).